A 339-amino-acid polypeptide reads, in one-letter code: Glyceraldehyde-3-phosphate dehydrogenase (339 aa).

Residues 13–14 (RI), aspartate 35, and lysine 84 contribute to the NAD(+) site. D-glyceraldehyde 3-phosphate contacts are provided by residues 156–158 (SCT), threonine 187, 216–217 (TG), and arginine 239. The active-site Nucleophile is cysteine 157. Asparagine 321 provides a ligand contact to NAD(+).

This sequence belongs to the glyceraldehyde-3-phosphate dehydrogenase family. In terms of assembly, homotetramer.

Its subcellular location is the cytoplasm. It catalyses the reaction D-glyceraldehyde 3-phosphate + phosphate + NAD(+) = (2R)-3-phospho-glyceroyl phosphate + NADH + H(+). It participates in carbohydrate degradation; glycolysis; pyruvate from D-glyceraldehyde 3-phosphate: step 1/5. This is Glyceraldehyde-3-phosphate dehydrogenase from Onchocerca volvulus.